A 453-amino-acid chain; its full sequence is Ribulose bisphosphate carboxylase large chain (453 aa).

The propeptide occupies 1–2 (MS). Pro3 carries the N-acetylproline modification. N6,N6,N6-trimethyllysine is present on Lys14. Substrate-binding residues include Asn123 and Thr173. Catalysis depends on Lys175, which acts as the Proton acceptor. Lys177 contacts substrate. 3 residues coordinate Mg(2+): Lys201, Asp203, and Glu204. Residue Lys201 is modified to N6-carboxylysine. Residue His294 is the Proton acceptor of the active site. Arg295, His327, and Ser379 together coordinate substrate.

Belongs to the RuBisCO large chain family. Type I subfamily. In terms of assembly, heterohexadecamer of 8 large chains and 8 small chains; disulfide-linked. The disulfide link is formed within the large subunit homodimers. The cofactor is Mg(2+). Post-translationally, the disulfide bond which can form in the large chain dimeric partners within the hexadecamer appears to be associated with oxidative stress and protein turnover.

It is found in the plastid. The protein resides in the chloroplast. It carries out the reaction 2 (2R)-3-phosphoglycerate + 2 H(+) = D-ribulose 1,5-bisphosphate + CO2 + H2O. It catalyses the reaction D-ribulose 1,5-bisphosphate + O2 = 2-phosphoglycolate + (2R)-3-phosphoglycerate + 2 H(+). In terms of biological role, ruBisCO catalyzes two reactions: the carboxylation of D-ribulose 1,5-bisphosphate, the primary event in carbon dioxide fixation, as well as the oxidative fragmentation of the pentose substrate in the photorespiration process. Both reactions occur simultaneously and in competition at the same active site. The sequence is that of Ribulose bisphosphate carboxylase large chain from Galium lucidum.